A 93-amino-acid chain; its full sequence is Large ribosomal subunit protein uL23 (93 aa).

It belongs to the universal ribosomal protein uL23 family. Part of the 50S ribosomal subunit. Contacts protein L29, and trigger factor when it is bound to the ribosome.

Functionally, one of the early assembly proteins it binds 23S rRNA. One of the proteins that surrounds the polypeptide exit tunnel on the outside of the ribosome. Forms the main docking site for trigger factor binding to the ribosome. The sequence is that of Large ribosomal subunit protein uL23 from Campylobacter lari (strain RM2100 / D67 / ATCC BAA-1060).